We begin with the raw amino-acid sequence, 408 residues long: Sprouty-related, EVH1 domain-containing protein 3 (408 aa).

One can recognise a WH1 domain in the interval 1-113 (MVRVRAVVMA…KSLLAALAAL (113 aa)). The tract at residues 118 to 226 (LTPSSSSSSS…YEDYRRSGPP (109 aa)) is disordered. The span at 120 to 130 (PSSSSSSSSPS) shows a compositional bias: low complexity. A KBD domain is found at 192 to 242 (LPFTGIPEPSESLAGAGSQGWGSRGYEDYRRSGPPPPPLALSTCVVRFAKT). Arg238 is subject to Asymmetric dimethylarginine. Arg246 is subject to Omega-N-methylarginine. The disordered stretch occupies residues 256-286 (LPAPLTEAAPPAPPARPPPGPGPTPAPAKAS). The segment covering 265-281 (PPAPPARPPPGPGPTPA) has biased composition (pro residues). The 112-residue stretch at 294 to 405 (RCVHCRALFR…CAGCGGRHEE (112 aa)) folds into the SPR domain.

Interacts with palmitoyltransferase ZDHHC17/HIP14; the interaction leads to palmitoylation of SPRED3. Phosphorylated on tyrosine. In terms of processing, palmitoylated by ZDHHC17/HIP14. Post-translationally, ubiquitinated. Brain specific.

It is found in the cell membrane. In terms of biological role, tyrosine kinase substrate that inhibits growth-factor-mediated activation of MAP kinase. Inhibits fibroblast growth factor (FGF)-induced retinal lens fiber differentiation, probably by inhibiting FGF-mediated phosphorylation of ERK1/2. Inhibits TGFB-induced epithelial-to-mesenchymal transition in lens epithelial cells. This chain is Sprouty-related, EVH1 domain-containing protein 3 (Spred3), found in Mus musculus (Mouse).